Reading from the N-terminus, the 88-residue chain is Carboxysome shell vertex protein CsoS4A (88 aa).

Residues 1-76 (MLICKVLKPL…SDLTIVGIID (76 aa)) enclose the BMV domain.

The protein belongs to the CcmL/EutN family. CsoS4 subfamily. As to quaternary structure, homopentamer.

It is found in the carboxysome. Its function is as follows. Probably forms vertices in the carboxysome, a polyhedral inclusion where RuBisCO (ribulose bisphosphate carboxylase, cbbL-cbbS) is sequestered. Has been modeled to induce curvature upon insertion into an otherwise flat hexagonal layer of major carboxysome subunits. Has not been identified in purified carboxysomes; it is expected to be present in very low amounts. The chain is Carboxysome shell vertex protein CsoS4A from Prochlorococcus marinus subsp. pastoris (strain CCMP1986 / NIES-2087 / MED4).